The primary structure comprises 385 residues: tRNA-specific 2-thiouridylase MnmA (385 aa).

ATP-binding positions include 29–36 and Leu-55; that span reads GLSGGVDS. Cys-116 serves as the catalytic Nucleophile. An intrachain disulfide couples Cys-116 to Cys-225. Gly-141 is a binding site for ATP. Residues 175-177 form an interaction with tRNA region; that stretch reads KDQ. Cys-225 serves as the catalytic Cysteine persulfide intermediate. Residues 330 to 331 are interaction with tRNA; that stretch reads RY.

This sequence belongs to the MnmA/TRMU family.

The protein localises to the cytoplasm. The catalysed reaction is S-sulfanyl-L-cysteinyl-[protein] + uridine(34) in tRNA + AH2 + ATP = 2-thiouridine(34) in tRNA + L-cysteinyl-[protein] + A + AMP + diphosphate + H(+). In terms of biological role, catalyzes the 2-thiolation of uridine at the wobble position (U34) of tRNA, leading to the formation of s(2)U34. In Prochlorococcus marinus (strain MIT 9301), this protein is tRNA-specific 2-thiouridylase MnmA.